The following is a 113-amino-acid chain: Iron-sulfur cluster insertion protein ErpA (113 aa).

Positions 41, 105, and 107 each coordinate iron-sulfur cluster.

The protein belongs to the HesB/IscA family. In terms of assembly, homodimer. Iron-sulfur cluster is required as a cofactor.

In terms of biological role, required for insertion of 4Fe-4S clusters for at least IspG. This Mannheimia succiniciproducens (strain KCTC 0769BP / MBEL55E) protein is Iron-sulfur cluster insertion protein ErpA.